A 156-amino-acid polypeptide reads, in one-letter code: Small ribosomal subunit protein uS7cz/uS7cy (156 aa).

The protein belongs to the universal ribosomal protein uS7 family. As to quaternary structure, part of the 30S ribosomal subunit.

The protein resides in the plastid. The protein localises to the chloroplast. Its function is as follows. One of the primary rRNA binding proteins, it binds directly to 16S rRNA where it nucleates assembly of the head domain of the 30S subunit. The sequence is that of Small ribosomal subunit protein uS7cz/uS7cy (rps7-A) from Triticum aestivum (Wheat).